A 245-amino-acid polypeptide reads, in one-letter code: Putative [LysW]-aminoadipate/[LysW]-glutamate kinase (245 aa).

Residues Arg60 and Asn162 each contribute to the substrate site.

It belongs to the acetylglutamate kinase family. LysZ subfamily.

The protein localises to the cytoplasm. It catalyses the reaction [amino-group carrier protein]-C-terminal-N-(1,4-dicarboxybutan-1-yl)-L-glutamine + ATP = [amino-group carrier protein]-C-terminal-N-(1-carboxy-5-phosphooxy-5-oxopentan-1-yl)-L-glutamine + ADP. It carries out the reaction [amino-group carrier protein]-C-terminal-gamma-(L-glutamyl)-L-glutamate + ATP = [amino-group carrier protein]-C-terminal-gamma-(5-phospho-L-glutamyl)-L-glutamate + ADP. It participates in amino-acid biosynthesis; L-lysine biosynthesis via AAA pathway; L-lysine from L-alpha-aminoadipate (Thermus route): step 2/5. Its pathway is amino-acid biosynthesis; L-arginine biosynthesis. Functionally, involved in both the arginine and lysine biosynthetic pathways. Phosphorylates the LysW-bound precursors glutamate (for arginine biosynthesis), respectively alpha-aminoadipate (for lysine biosynthesis). The sequence is that of Putative [LysW]-aminoadipate/[LysW]-glutamate kinase from Pyrococcus abyssi (strain GE5 / Orsay).